The chain runs to 316 residues: Ribosomal protein L11 methyltransferase (316 aa).

Residues Thr161, Gly182, Asp204, and Asn249 each contribute to the S-adenosyl-L-methionine site.

This sequence belongs to the methyltransferase superfamily. PrmA family.

The protein resides in the cytoplasm. It carries out the reaction L-lysyl-[protein] + 3 S-adenosyl-L-methionine = N(6),N(6),N(6)-trimethyl-L-lysyl-[protein] + 3 S-adenosyl-L-homocysteine + 3 H(+). Methylates ribosomal protein L11. This Ruminiclostridium cellulolyticum (strain ATCC 35319 / DSM 5812 / JCM 6584 / H10) (Clostridium cellulolyticum) protein is Ribosomal protein L11 methyltransferase.